Here is a 194-residue protein sequence, read N- to C-terminus: Porimin (194 aa).

Positions 1–24 (MALCARAALLLGALQVLALPGAVA) are cleaved as a signal peptide. Residues 25–151 (QETYAQGSPS…PTKGKGSKFD (127 aa)) lie on the Extracellular side of the membrane. N-linked (GlcNAc...) asparagine glycosylation is found at N36, N47, N51, N59, N76, and N114. A disordered region spans residues 88–124 (KVSTPGVSPHVTPSASKSTPKTSASPNSTQTSASMTT). Residues 99–124 (TPSASKSTPKTSASPNSTQTSASMTT) show a composition bias toward low complexity. The helical transmembrane segment at 152–172 (AGSFVGGIVLTLGVLSILYIG) threads the bilayer. At 173-194 (CKMYYSRRGIRYRSIDEHDAII) the chain is on the cytoplasmic side. S186 carries the phosphoserine modification.

It belongs to the CD164 family.

The protein localises to the membrane. Implicated in oncotic cell death, characterized by cell swelling, organelle swelling, vacuolization and increased membrane permeability. In Rattus norvegicus (Rat), this protein is Porimin (Tmem123).